The sequence spans 215 residues: Phosphatidylserine decarboxylase proenzyme (215 aa).

The active-site Schiff-base intermediate with substrate; via pyruvic acid is Ser184. Ser184 carries the post-translational modification Pyruvic acid (Ser); by autocatalysis.

The protein belongs to the phosphatidylserine decarboxylase family. PSD-A subfamily. In terms of assembly, heterodimer of a large membrane-associated beta subunit and a small pyruvoyl-containing alpha subunit. Pyruvate is required as a cofactor. In terms of processing, is synthesized initially as an inactive proenzyme. Formation of the active enzyme involves a self-maturation process in which the active site pyruvoyl group is generated from an internal serine residue via an autocatalytic post-translational modification. Two non-identical subunits are generated from the proenzyme in this reaction, and the pyruvate is formed at the N-terminus of the alpha chain, which is derived from the carboxyl end of the proenzyme. The post-translation cleavage follows an unusual pathway, termed non-hydrolytic serinolysis, in which the side chain hydroxyl group of the serine supplies its oxygen atom to form the C-terminus of the beta chain, while the remainder of the serine residue undergoes an oxidative deamination to produce ammonia and the pyruvoyl prosthetic group on the alpha chain.

The protein resides in the cell membrane. The enzyme catalyses a 1,2-diacyl-sn-glycero-3-phospho-L-serine + H(+) = a 1,2-diacyl-sn-glycero-3-phosphoethanolamine + CO2. It functions in the pathway phospholipid metabolism; phosphatidylethanolamine biosynthesis; phosphatidylethanolamine from CDP-diacylglycerol: step 2/2. Catalyzes the formation of phosphatidylethanolamine (PtdEtn) from phosphatidylserine (PtdSer). The sequence is that of Phosphatidylserine decarboxylase proenzyme from Aromatoleum aromaticum (strain DSM 19018 / LMG 30748 / EbN1) (Azoarcus sp. (strain EbN1)).